The following is a 325-amino-acid chain: Geranylgeranyl transferase type-2 subunit beta (325 aa).

6 PFTB repeats span residues 9-50 (KEKH…CVLD), 57-99 (KEEV…ATYD), 109-150 (KVRL…SILG), 157-198 (VDPA…AIAN), 208-249 (LEEI…AIIG), and 256-298 (YEKL…SLMG). Residues 183–185 (HAA) and 228–240 (RPSK…YSWW) each bind geranylgeranyl diphosphate. Positions 234, 236, and 286 each coordinate Zn(2+).

It belongs to the protein prenyltransferase subunit beta family. In terms of assembly, heterodimer of an alpha and a beta subunit. It depends on Zn(2+) as a cofactor.

It catalyses the reaction geranylgeranyl diphosphate + L-cysteinyl-[protein] = S-geranylgeranyl-L-cysteinyl-[protein] + diphosphate. Its function is as follows. Catalyzes the transfer of a geranyl-geranyl moiety from geranyl-geranyl pyrophosphate to proteins having the C-terminal -XCC or -XCXC, where both cysteines may become modified. Acts on YPT1 and SEC4. This chain is Geranylgeranyl transferase type-2 subunit beta (BET2), found in Saccharomyces cerevisiae (strain ATCC 204508 / S288c) (Baker's yeast).